A 623-amino-acid chain; its full sequence is Glutathione import ATP-binding protein GsiA (623 aa).

ABC transporter domains lie at 15–269 and 314–564; these read VENL…RALL and LRVR…RKLL. Residues 49 to 56 and 357 to 364 contribute to the ATP site; these read GESGSGKS.

It belongs to the ABC transporter superfamily. Glutathione importer (TC 3.A.1.5.11) family. In terms of assembly, the complex is composed of two ATP-binding proteins (GsiA), two transmembrane proteins (GsiC and GsiD) and a solute-binding protein (GsiB).

Its subcellular location is the cell inner membrane. It catalyses the reaction glutathione(out) + ATP + H2O = glutathione(in) + ADP + phosphate + H(+). Inhibited by verapamil but not by carbonyl cyanide m-chlorophenylhydrazone (CCCP). Part of the ABC transporter complex GsiABCD involved in glutathione import. Responsible for energy coupling to the transport system. This Escherichia coli (strain K12) protein is Glutathione import ATP-binding protein GsiA.